The sequence spans 398 residues: ATP-dependent RNA helicase eIF4A (398 aa).

The Q motif signature appears at 25 to 53; the sequence is DSFDSMELKPELLRGVYAYGFERPSAIQQ. Residues 56–226 enclose the Helicase ATP-binding domain; it reads ILPIVKGNDV…TKFMRDPVRI (171 aa). 69–76 serves as a coordination point for ATP; the sequence is AQSGTGKT. A DEAD box motif is present at residues 174-177; sequence DEAD. Residues 237 to 398 form the Helicase C-terminal domain; sequence GIKQFYIAVE…EMPMNVADLI (162 aa).

This sequence belongs to the DEAD box helicase family. eIF4A subfamily. In terms of assembly, component of the eIF4F complex, which composition varies with external and internal environmental conditions. It is composed of at least eIF4A, eIF4E and eIF4G.

The protein localises to the cytoplasm. It carries out the reaction ATP + H2O = ADP + phosphate + H(+). In terms of biological role, ATP-dependent RNA helicase which is a subunit of the eIF4F complex involved in cap recognition and is required for mRNA binding to ribosome. In the current model of translation initiation, eIF4A unwinds RNA secondary structures in the 5'-UTR of mRNAs which is necessary to allow efficient binding of the small ribosomal subunit, and subsequent scanning for the initiator codon. This is ATP-dependent RNA helicase eIF4A (tif1) from Emericella nidulans (strain FGSC A4 / ATCC 38163 / CBS 112.46 / NRRL 194 / M139) (Aspergillus nidulans).